The chain runs to 611 residues: Dihydroxy-acid dehydratase (611 aa).

Mg(2+) is bound at residue aspartate 81. Cysteine 122 contacts [2Fe-2S] cluster. Residues aspartate 123 and lysine 124 each contribute to the Mg(2+) site. Lysine 124 is modified (N6-carboxylysine). Residue cysteine 195 participates in [2Fe-2S] cluster binding. Glutamate 491 is a binding site for Mg(2+). The active-site Proton acceptor is serine 517.

Belongs to the IlvD/Edd family. In terms of assembly, homodimer. Requires [2Fe-2S] cluster as cofactor. Mg(2+) is required as a cofactor.

The enzyme catalyses (2R)-2,3-dihydroxy-3-methylbutanoate = 3-methyl-2-oxobutanoate + H2O. It carries out the reaction (2R,3R)-2,3-dihydroxy-3-methylpentanoate = (S)-3-methyl-2-oxopentanoate + H2O. Its pathway is amino-acid biosynthesis; L-isoleucine biosynthesis; L-isoleucine from 2-oxobutanoate: step 3/4. The protein operates within amino-acid biosynthesis; L-valine biosynthesis; L-valine from pyruvate: step 3/4. Functions in the biosynthesis of branched-chain amino acids. Catalyzes the dehydration of (2R,3R)-2,3-dihydroxy-3-methylpentanoate (2,3-dihydroxy-3-methylvalerate) into 2-oxo-3-methylpentanoate (2-oxo-3-methylvalerate) and of (2R)-2,3-dihydroxy-3-methylbutanoate (2,3-dihydroxyisovalerate) into 2-oxo-3-methylbutanoate (2-oxoisovalerate), the penultimate precursor to L-isoleucine and L-valine, respectively. This chain is Dihydroxy-acid dehydratase, found in Glaesserella parasuis serovar 5 (strain SH0165) (Haemophilus parasuis).